The primary structure comprises 241 residues: Interleukin-6 (241 aa).

Residues 1–25 form a disordered region; sequence MNFTEGCEATGRRPGSAGSRRRRAP. Positions 1 to 46 are cleaved as a signal peptide; that stretch reads MNFTEGCEATGRRPGSAGSRRRRAPRPGPVALLPLLLPLLLPPAAA. Residues Cys-122 and Cys-132 are joined by a disulfide bond.

This sequence belongs to the IL-6 superfamily. As to quaternary structure, component of a hexamer of two molecules each of IL6, IL6R and IL6ST; first binds to IL6R to associate with the signaling subunit IL6ST.

The protein resides in the secreted. Its function is as follows. Cytokine with a wide variety of biological functions in immunity, tissue regeneration, and metabolism. Binds to IL6R, then the complex associates to the signaling subunit IL6ST/gp130 to trigger the intracellular IL6-signaling pathway. The interaction with the membrane-bound IL6R and IL6ST stimulates 'classic signaling', whereas the binding of IL6 and soluble IL6R to IL6ST stimulates 'trans-signaling'. Alternatively, 'cluster signaling' occurs when membrane-bound IL6:IL6R complexes on transmitter cells activate IL6ST receptors on neighboring receiver cells. This Gallus gallus (Chicken) protein is Interleukin-6 (IL6).